Consider the following 501-residue polypeptide: Cytochrome P450 7A1 (501 aa).

Residues 4 to 24 (ISLLGGIVTAVCCCLWLLLGM) traverse the membrane as a helical segment. Cys-441 is a heme binding site.

This sequence belongs to the cytochrome P450 family. The cofactor is heme.

The protein localises to the endoplasmic reticulum membrane. It is found in the microsome membrane. The enzyme catalyses cholesterol + reduced [NADPH--hemoprotein reductase] + O2 = 7alpha-hydroxycholesterol + oxidized [NADPH--hemoprotein reductase] + H2O + H(+). The catalysed reaction is 4beta-hydroxycholesterol + reduced [NADPH--hemoprotein reductase] + O2 = 4beta,7alpha-dihydroxycholesterol + oxidized [NADPH--hemoprotein reductase] + H2O + H(+). It carries out the reaction lathosterol + reduced [NADPH--hemoprotein reductase] + O2 = 7alpha,8alpha-epoxy-5alpha-cholestan-3beta-ol + oxidized [NADPH--hemoprotein reductase] + H2O + H(+). It catalyses the reaction lathosterol + reduced [NADPH--hemoprotein reductase] + O2 = 5alpha-cholestan-7-oxo-3beta-ol + oxidized [NADPH--hemoprotein reductase] + H2O + H(+). The enzyme catalyses 7-dehydrocholesterol + reduced [NADPH--hemoprotein reductase] + O2 = 7-oxocholesterol + oxidized [NADPH--hemoprotein reductase] + H2O + H(+). The catalysed reaction is (24S)-hydroxycholesterol + reduced [NADPH--hemoprotein reductase] + O2 = (24S)-7alpha-dihydroxycholesterol + oxidized [NADPH--hemoprotein reductase] + H2O + H(+). It carries out the reaction (24R)-hydroxycholesterol + reduced [NADPH--hemoprotein reductase] + O2 = (24R)-7alpha-dihydroxycholesterol + oxidized [NADPH--hemoprotein reductase] + H2O + H(+). The protein operates within lipid metabolism; bile acid biosynthesis. Its pathway is steroid metabolism; cholesterol degradation. In terms of biological role, a cytochrome P450 monooxygenase involved in the metabolism of endogenous cholesterol and its oxygenated derivatives (oxysterols). Mechanistically, uses molecular oxygen inserting one oxygen atom into a substrate, and reducing the second into a water molecule, with two electrons provided by NADPH via cytochrome P450 reductase (CPR; NADPH-ferrihemoprotein reductase). Functions as a critical regulatory enzyme of bile acid biosynthesis and cholesterol homeostasis. Catalyzes the hydroxylation of carbon hydrogen bond at 7-alpha position of cholesterol, a rate-limiting step in cholesterol catabolism and bile acid biosynthesis. 7-alpha hydroxylates several oxysterols, including 4beta-hydroxycholesterol and 24-hydroxycholesterol. Catalyzes the oxidation of the 7,8 double bond of 7-dehydrocholesterol and lathosterol with direct and predominant formation of the 7-keto derivatives. The polypeptide is Cytochrome P450 7A1 (CYP7A1) (Sus scrofa (Pig)).